Here is a 129-residue protein sequence, read N- to C-terminus: Phosphoribosyl-AMP cyclohydrolase (129 aa).

Position 76 (aspartate 76) interacts with Mg(2+). Cysteine 77 provides a ligand contact to Zn(2+). Aspartate 78 and aspartate 80 together coordinate Mg(2+). Zn(2+) is bound by residues cysteine 97 and cysteine 104.

Belongs to the PRA-CH family. In terms of assembly, homodimer. It depends on Mg(2+) as a cofactor. Zn(2+) serves as cofactor.

The protein localises to the cytoplasm. The catalysed reaction is 1-(5-phospho-beta-D-ribosyl)-5'-AMP + H2O = 1-(5-phospho-beta-D-ribosyl)-5-[(5-phospho-beta-D-ribosylamino)methylideneamino]imidazole-4-carboxamide. Its pathway is amino-acid biosynthesis; L-histidine biosynthesis; L-histidine from 5-phospho-alpha-D-ribose 1-diphosphate: step 3/9. Its function is as follows. Catalyzes the hydrolysis of the adenine ring of phosphoribosyl-AMP. This chain is Phosphoribosyl-AMP cyclohydrolase, found in Polaromonas sp. (strain JS666 / ATCC BAA-500).